Consider the following 157-residue polypeptide: SsrA-binding protein (157 aa).

It belongs to the SmpB family.

Its subcellular location is the cytoplasm. In terms of biological role, required for rescue of stalled ribosomes mediated by trans-translation. Binds to transfer-messenger RNA (tmRNA), required for stable association of tmRNA with ribosomes. tmRNA and SmpB together mimic tRNA shape, replacing the anticodon stem-loop with SmpB. tmRNA is encoded by the ssrA gene; the 2 termini fold to resemble tRNA(Ala) and it encodes a 'tag peptide', a short internal open reading frame. During trans-translation Ala-aminoacylated tmRNA acts like a tRNA, entering the A-site of stalled ribosomes, displacing the stalled mRNA. The ribosome then switches to translate the ORF on the tmRNA; the nascent peptide is terminated with the 'tag peptide' encoded by the tmRNA and targeted for degradation. The ribosome is freed to recommence translation, which seems to be the essential function of trans-translation. This is SsrA-binding protein from Bacillus licheniformis (strain ATCC 14580 / DSM 13 / JCM 2505 / CCUG 7422 / NBRC 12200 / NCIMB 9375 / NCTC 10341 / NRRL NRS-1264 / Gibson 46).